A 44-amino-acid polypeptide reads, in one-letter code: uncharacterized protein (44 aa).

Residues 6 to 26 (SILIRGGGGVLIVLILLLWIV) form a helical membrane-spanning segment.

The protein resides in the membrane. This is an uncharacterized protein from Ornithodoros (relapsing fever ticks).